The sequence spans 428 residues: MNILIIGNGGREHALGWKAAQSPLADKIYVAPGNAGTALEPTLENVDIAATDIAGLLAFAQSHDIGLTIVGPEAPLVIGVVDAFRAAGLAIFGPTQAAAQLEGSKAFTKDFLARHNIPSAEYQNFTDVEAALAYVRQKGAPIVIKADGLAAGKGVIVAMTQEEAETAVNDMLAGNAFGDAGHRIVVEEFLDGEEASFIVMVDGENVLPMATSQDHKRVGDGDTGPNTGGMGAYSPAPVVTDDVHQRVMDQVIWPTVRGMAAEGNIYTGFLYAGLMISADGQPKVIEFNCRFGDPETQPIMLRMRSDLVELCLAGTQGKLNEKTSDWDERPSLGVVLAAGGYPADYRQGDVIHGLPQQEVKDGKVFHAGTKLNGNHEVVTNGGRVLCVTALGETVAQAQQYAYQLAEGIQWEGVFCRKDIGYRAIARGK.

Residues 109–316 (KDFLARHNIP…LVELCLAGTQ (208 aa)) form the ATP-grasp domain. 135 to 196 (VRQKGAPIVI…EEFLDGEEAS (62 aa)) is an ATP binding site. The Mg(2+) site is built by glutamate 286 and asparagine 288.

This sequence belongs to the GARS family. It depends on Mg(2+) as a cofactor. Mn(2+) is required as a cofactor.

The enzyme catalyses 5-phospho-beta-D-ribosylamine + glycine + ATP = N(1)-(5-phospho-beta-D-ribosyl)glycinamide + ADP + phosphate + H(+). Its pathway is purine metabolism; IMP biosynthesis via de novo pathway; N(1)-(5-phospho-D-ribosyl)glycinamide from 5-phospho-alpha-D-ribose 1-diphosphate: step 2/2. The sequence is that of Phosphoribosylamine--glycine ligase from Yersinia pestis.